A 720-amino-acid polypeptide reads, in one-letter code: DNA ligase (720 aa).

NAD(+)-binding positions include 60-64 (DYDYD), 109-110 (SL), and glutamate 140. Lysine 142 serves as the catalytic N6-AMP-lysine intermediate. Positions 163 and 201 each coordinate NAD(+). The segment at 220–239 (GLPPFANPRNAAAGSIRQKD) is disordered. NAD(+) contacts are provided by lysine 320 and lysine 344. Zn(2+) contacts are provided by cysteine 438, cysteine 441, cysteine 456, and cysteine 461. Positions 619–709 (KVADVLKGKT…VDLEKIKKED (91 aa)) constitute a BRCT domain.

This sequence belongs to the NAD-dependent DNA ligase family. LigA subfamily. The cofactor is Mn(2+). Mg(2+) is required as a cofactor.

The enzyme catalyses NAD(+) + (deoxyribonucleotide)n-3'-hydroxyl + 5'-phospho-(deoxyribonucleotide)m = (deoxyribonucleotide)n+m + AMP + beta-nicotinamide D-nucleotide.. In terms of biological role, DNA ligase that catalyzes the formation of phosphodiester linkages between 5'-phosphoryl and 3'-hydroxyl groups in double-stranded DNA using NAD as a coenzyme and as the energy source for the reaction. It is essential for DNA replication and repair of damaged DNA. In Aquifex aeolicus (strain VF5), this protein is DNA ligase.